A 73-amino-acid chain; its full sequence is uncharacterized protein (73 aa).

Belongs to the asfivirus I73R family.

It localises to the virion. This is an uncharacterized protein from Ornithodoros (relapsing fever ticks).